Consider the following 131-residue polypeptide: uncharacterized protein (131 aa).

The tract at residues 16–71 (MSEQERDEVLEDDDDDEDNKSSQQERDEFVEDDDNNSIQSSPSCAQPLLTQYHDDG) is disordered. A compositionally biased stretch (acidic residues) spans 20–33 (ERDEVLEDDDDDED).

This is an uncharacterized protein from Dictyostelium discoideum (Social amoeba).